The following is a 365-amino-acid chain: Probable L-tyrosine/L-aspartate decarboxylase (365 aa).

K224 is modified (N6-(pyridoxal phosphate)lysine).

The protein belongs to the group II decarboxylase family. MfnA subfamily. Pyridoxal 5'-phosphate serves as cofactor.

It catalyses the reaction L-tyrosine + H(+) = tyramine + CO2. The catalysed reaction is L-aspartate + H(+) = beta-alanine + CO2. The protein operates within cofactor biosynthesis; methanofuran biosynthesis. It participates in cofactor biosynthesis; coenzyme A biosynthesis. Catalyzes the decarboxylation of L-tyrosine to produce tyramine for methanofuran biosynthesis. Can also catalyze the decarboxylation of L-aspartate to produce beta-alanine for coenzyme A (CoA) biosynthesis. This is Probable L-tyrosine/L-aspartate decarboxylase from Methanoculleus marisnigri (strain ATCC 35101 / DSM 1498 / JR1).